Reading from the N-terminus, the 78-residue chain is Large ribosomal subunit protein bL28 (78 aa).

A compositionally biased stretch (polar residues) spans 1 to 20 (MSRVCQLTGTRANNGMSVSH). Residues 1–23 (MSRVCQLTGTRANNGMSVSHSHI) are disordered.

The protein belongs to the bacterial ribosomal protein bL28 family.

This Prochlorococcus marinus (strain NATL2A) protein is Large ribosomal subunit protein bL28.